A 219-amino-acid chain; its full sequence is Redox-sensing transcriptional repressor Rex (219 aa).

Positions 17 to 56 (VYLRVLDNLVKRDIEVVSSKSLSKETGFTAEQIRKDLAFF) form a DNA-binding region, H-T-H motif. 91-96 (GAGHLG) is an NAD(+) binding site.

The protein belongs to the transcriptional regulatory Rex family. As to quaternary structure, homodimer.

The protein resides in the cytoplasm. Modulates transcription in response to changes in cellular NADH/NAD(+) redox state. The polypeptide is Redox-sensing transcriptional repressor Rex (Natranaerobius thermophilus (strain ATCC BAA-1301 / DSM 18059 / JW/NM-WN-LF)).